An 82-amino-acid polypeptide reads, in one-letter code: Proline, histidine and glycine-rich protein 1 (82 aa).

The segment at 20 to 82 is disordered; the sequence is HCGPPPGHGP…PGHPPPGPHH (63 aa).

This chain is Proline, histidine and glycine-rich protein 1 (PHGR1), found in Homo sapiens (Human).